The sequence spans 173 residues: MTYFVLFLGLCFVLGGLAVASNPSPYYGVVGLVLASVAGCGWLLSLGVSFVSLVLFMVYLGGMLVVFVYSVSLAADPFPEAWGDWGVVGYGVGFVVVLVVGLVVGGFVGDLDFGVVTVDSVGMFSVRLDFSGVAMFYSCGVGMFLVAGWGLLLTLFVVLELVRGLSRGAIRAV.

The next 5 membrane-spanning stretches (helical) occupy residues 1-21 (MTYF…AVAS), 27-47 (YGVV…LSLG), 48-68 (VSFV…VVFV), 87-107 (VVGY…VGGF), and 139-159 (CGVG…FVVL).

This sequence belongs to the complex I subunit 6 family.

It localises to the mitochondrion membrane. The catalysed reaction is a ubiquinone + NADH + 5 H(+)(in) = a ubiquinol + NAD(+) + 4 H(+)(out). Core subunit of the mitochondrial membrane respiratory chain NADH dehydrogenase (Complex I) that is believed to belong to the minimal assembly required for catalysis. Complex I functions in the transfer of electrons from NADH to the respiratory chain. The immediate electron acceptor for the enzyme is believed to be ubiquinone. The protein is NADH-ubiquinone oxidoreductase chain 6 (MT-ND6) of Ptychoramphus aleuticus (Cassin's auklet).